The sequence spans 137 residues: Large ribosomal subunit protein uL16 (137 aa).

This sequence belongs to the universal ribosomal protein uL16 family. As to quaternary structure, part of the 50S ribosomal subunit.

Functionally, binds 23S rRNA and is also seen to make contacts with the A and possibly P site tRNAs. This chain is Large ribosomal subunit protein uL16, found in Rhodopseudomonas palustris (strain HaA2).